The sequence spans 133 residues: Large ribosomal subunit protein uL15 (133 aa).

The interval 1 to 57 is disordered; the sequence is MALEKLTPAAGSTHATKRIGRGQGSGNGKTAGKGNKGQRARKGYNEKRGFEGGQQPL. Gly residues predominate over residues 21 to 35; the sequence is RGQGSGNGKTAGKGN.

This sequence belongs to the universal ribosomal protein uL15 family. Part of the 50S ribosomal subunit.

Its function is as follows. Binds to the 23S rRNA. The sequence is that of Large ribosomal subunit protein uL15 from Campylobacter concisus (strain 13826).